The primary structure comprises 291 residues: Light-independent protochlorophyllide reductase iron-sulfur ATP-binding protein (291 aa).

Residues 10-15 (GIGKST) and Lys39 each bind ATP. Residue Ser14 coordinates Mg(2+). Residues Cys95 and Cys129 each contribute to the [4Fe-4S] cluster site. ATP is bound at residue 180–181 (NR).

It belongs to the NifH/BchL/ChlL family. In terms of assembly, homodimer. Protochlorophyllide reductase is composed of three subunits; ChlL, ChlN and ChlB. Requires [4Fe-4S] cluster as cofactor.

Its subcellular location is the plastid. The protein localises to the chloroplast. The enzyme catalyses chlorophyllide a + oxidized 2[4Fe-4S]-[ferredoxin] + 2 ADP + 2 phosphate = protochlorophyllide a + reduced 2[4Fe-4S]-[ferredoxin] + 2 ATP + 2 H2O. It functions in the pathway porphyrin-containing compound metabolism; chlorophyll biosynthesis (light-independent). Functionally, component of the dark-operative protochlorophyllide reductase (DPOR) that uses Mg-ATP and reduced ferredoxin to reduce ring D of protochlorophyllide (Pchlide) to form chlorophyllide a (Chlide). This reaction is light-independent. The L component serves as a unique electron donor to the NB-component of the complex, and binds Mg-ATP. In Picea abies (Norway spruce), this protein is Light-independent protochlorophyllide reductase iron-sulfur ATP-binding protein.